The sequence spans 182 residues: NADH-quinone oxidoreductase subunit I (182 aa).

2 consecutive 4Fe-4S ferredoxin-type domains span residues 52-82 (LTRDPDGEERCVACNLCAVACPVGCISLQKA) and 92-121 (DFFRINFSRCIFCGLCEEACPTTAIQLTPD). [4Fe-4S] cluster contacts are provided by C62, C65, C68, C72, C101, C104, C107, and C111.

The protein belongs to the complex I 23 kDa subunit family. NDH-1 is composed of 13 different subunits. Subunits NuoA, H, J, K, L, M, N constitute the membrane sector of the complex. It depends on [4Fe-4S] cluster as a cofactor.

The protein resides in the cell inner membrane. It catalyses the reaction a quinone + NADH + 5 H(+)(in) = a quinol + NAD(+) + 4 H(+)(out). In terms of biological role, NDH-1 shuttles electrons from NADH, via FMN and iron-sulfur (Fe-S) centers, to quinones in the respiratory chain. The immediate electron acceptor for the enzyme in this species is believed to be ubiquinone. Couples the redox reaction to proton translocation (for every two electrons transferred, four hydrogen ions are translocated across the cytoplasmic membrane), and thus conserves the redox energy in a proton gradient. This is NADH-quinone oxidoreductase subunit I from Pseudomonas fluorescens (strain ATCC BAA-477 / NRRL B-23932 / Pf-5).